A 471-amino-acid polypeptide reads, in one-letter code: 3-isopropylmalate dehydratase large subunit (471 aa).

3 residues coordinate [4Fe-4S] cluster: Cys-347, Cys-407, and Cys-410.

The protein belongs to the aconitase/IPM isomerase family. LeuC type 1 subfamily. As to quaternary structure, heterodimer of LeuC and LeuD. [4Fe-4S] cluster is required as a cofactor.

The enzyme catalyses (2R,3S)-3-isopropylmalate = (2S)-2-isopropylmalate. It functions in the pathway amino-acid biosynthesis; L-leucine biosynthesis; L-leucine from 3-methyl-2-oxobutanoate: step 2/4. Functionally, catalyzes the isomerization between 2-isopropylmalate and 3-isopropylmalate, via the formation of 2-isopropylmaleate. In Geobacillus sp. (strain WCH70), this protein is 3-isopropylmalate dehydratase large subunit.